Consider the following 590-residue polypeptide: MKKYPKIGIRPTIDGRQGGVRESLEEKTMNLAKAVAELITSNLKNGDGTPVECVIADGTIGRVAESAACAEKFEREGVGATITVTSCWCYGAETMDMNPYYPKAVWGFNGTERPGAVYLAAVLAGHAQKGLPAFGIYGRDVQDLNDNSIPADVAEKILRFARAAQAVATMRGKSYLSMGSVSMGIAGSIVNPDFFQEYLGMRNESIDLTEIIRRMAEGIYDKEEYAKAMAWTEKYCKKNEGNDFNIPEKTKTRAQKDEDWEFIVKMTIIMRDLMQGNPKLKELGFKEEALGHNAIAAGFQGQRQWTDFYPNGDFSEALLNTSFDWNGIREAFVVATENDACNGVAMLFGHLLTNRAQIFSDVRTYWSPEAVKRVTGKELTGMAANGIIHLINSGATTLDGTGQQTNANGEPAMKPCWEITEGEVEKCLEATTWYPANRDYFRGGGFSSNFLSKGGMPVTMMRLNLIKGLGPVLQIAEGWTVEIDPEIHKLLDERTDRTWPTTWFVPRLCDKPAFKDVYSVMNNWGANHGAISYGHIGQDVITLASMLRIPVCMHNVEEDQIFRPAAWNAFGMDKEGADYRACTTYGPIYK.

Residues glutamate 337 and aspartate 361 each act as proton acceptor in the active site. Glutamate 337, aspartate 361, and histidine 528 together coordinate Mn(2+).

The protein belongs to the L-fucose isomerase family. The cofactor is Mn(2+).

The protein resides in the cytoplasm. The enzyme catalyses L-fucose = L-fuculose. The protein operates within carbohydrate degradation; L-fucose degradation; L-lactaldehyde and glycerone phosphate from L-fucose: step 1/3. Converts the aldose L-fucose into the corresponding ketose L-fuculose. The chain is L-fucose isomerase from Bacteroides fragilis (strain YCH46).